We begin with the raw amino-acid sequence, 317 residues long: Melanocyte-stimulating hormone receptor (317 aa).

The Extracellular portion of the chain corresponds to 1–37; that stretch reads MAVQGFQRRLLGSLNSTPTAIPQLGLAANQTGARCLE. The N-linked (GlcNAc...) asparagine glycan is linked to Asn-29. The helical transmembrane segment at 38 to 63 threads the bilayer; the sequence is VSIPDGLFLSLGLVSLVENVLVVATI. Over 64–72 the chain is Cytoplasmic; sequence AKNRNLHSP. A helical transmembrane segment spans residues 73-93; sequence TYCFICCLALSDLLVSGGNVL. Topologically, residues 94 to 118 are extracellular; the sequence is ETVVILLLEASALAARAAVVQPLDN. A helical membrane pass occupies residues 119-140; it reads VIDVITCSSMVSSLCFLGAIAM. Over 141 to 163 the chain is Cytoplasmic; sequence DRYVSIFYALRYHSIVTLPRARQ. The chain crosses the membrane as a helical span at residues 164–183; sequence AIAAIWVASVLFSTLFIAYY. The Extracellular portion of the chain corresponds to 184 to 191; the sequence is DHAAVLLC. Residues 192 to 211 form a helical membrane-spanning segment; it reads LVVFFLAMLVLMAVLYVHML. Topologically, residues 212–240 are cytoplasmic; the sequence is ARACQHAQGIARLHKRQRPLHQGFGLKGA. The helical transmembrane segment at 241–266 threads the bilayer; sequence VTLTILLGIFFLCWGPFFLHLTLIVL. At 267–279 the chain is on the extracellular side; it reads CPQHPTCSCIFKN. The helical transmembrane segment at 280–300 threads the bilayer; it reads FNLFLTLIICNAIIDPLIYAF. Residues 301-317 are Cytoplasmic-facing; that stretch reads RRQELRRTLKEGLTCSW. Cys-315 carries the S-palmitoyl cysteine lipid modification.

It belongs to the G-protein coupled receptor 1 family. In terms of assembly, interacts with MGRN1, but does not undergo MGRN1-mediated ubiquitination; this interaction competes with GNAS-binding and thus inhibits agonist-induced cAMP production. Interacts with OPN3; the interaction results in a decrease in MC1R-mediated cAMP signaling and ultimately a decrease in melanin production in melanocytes.

The protein localises to the cell membrane. Receptor for MSH (alpha, beta and gamma) and ACTH. The activity of this receptor is mediated by G proteins which activate adenylate cyclase. Mediates melanogenesis, the production of eumelanin (black/brown) and phaeomelanin (red/yellow), via regulation of cAMP signaling in melanocytes. This chain is Melanocyte-stimulating hormone receptor (MC1R), found in Hylobates lar (Lar gibbon).